The chain runs to 481 residues: F-box/LRR-repeat protein At3g03360 (481 aa).

The tract at residues 1-28 (MEKESQENSTRPDASSTVFSSSKSTCAS) is disordered. Over residues 14 to 28 (ASSTVFSSSKSTCAS) the composition is skewed to low complexity. The 49-residue stretch at 36–84 (GDLISRLPDDILQLILSYLPTRLAIKTSVLSRRWRHVWSDTWSLSFHRD) folds into the F-box domain. 5 LRR repeats span residues 118–145 (SRPD…SLYL), 196–221 (HCNI…LLFF), 295–320 (EADF…TLGA), 350–375 (ISRY…TIHP), and 413–439 (RRNV…ELIV).

The polypeptide is F-box/LRR-repeat protein At3g03360 (Arabidopsis thaliana (Mouse-ear cress)).